The following is a 610-amino-acid chain: Aspartate--tRNA(Asp/Asn) ligase (610 aa).

An L-aspartate-binding site is contributed by glutamate 177. An aspartate region spans residues 201 to 204 (QLFK). Arginine 223 provides a ligand contact to L-aspartate. Residues 223–225 (RDE) and glutamine 232 contribute to the ATP site. Histidine 461 serves as a coordination point for L-aspartate. Glutamate 499 is a binding site for ATP. Arginine 506 is an L-aspartate binding site. An ATP-binding site is contributed by 551–554 (GVDR).

Belongs to the class-II aminoacyl-tRNA synthetase family. Type 1 subfamily. Homodimer.

It is found in the cytoplasm. The catalysed reaction is tRNA(Asx) + L-aspartate + ATP = L-aspartyl-tRNA(Asx) + AMP + diphosphate. Functionally, aspartyl-tRNA synthetase with relaxed tRNA specificity since it is able to aspartylate not only its cognate tRNA(Asp) but also tRNA(Asn). Reaction proceeds in two steps: L-aspartate is first activated by ATP to form Asp-AMP and then transferred to the acceptor end of tRNA(Asp/Asn). The protein is Aspartate--tRNA(Asp/Asn) ligase of Parasynechococcus marenigrum (strain WH8102).